We begin with the raw amino-acid sequence, 436 residues long: Bystin (436 aa).

Residues 1–105 (MPKLKVTRGA…GSDEEDEEWP (105 aa)) are disordered. The residue at position 54 (Ser54) is a Phosphoserine. A compositionally biased stretch (basic and acidic residues) spans 70–86 (TEHATGDRPAKPRERAT). Acidic residues predominate over residues 96–105 (GSDEEDEEWP). Ser97 bears the Phosphoserine mark. The residue at position 155 (Thr155) is a Phosphothreonine. Phosphoserine is present on residues Ser166 and Ser413.

It belongs to the bystin family. As to quaternary structure, binds trophinin, tastin and cytokeratins.

It is found in the cytoplasm. It localises to the nucleus. The protein resides in the nucleolus. Functionally, required for processing of 20S pre-rRNA precursor and biogenesis of 40S ribosomal subunits. The polypeptide is Bystin (Rattus norvegicus (Rat)).